Consider the following 380-residue polypeptide: Protein arginine N-methyltransferase PRMT10 (380 aa).

Positions 26 to 357 (EVDFANYFCT…KENHRLMDME (332 aa)) constitute an SAM-dependent MTase PRMT-type domain. The S-adenosyl-L-methionine site is built by Q42, R51, G75, E97, and E126. Catalysis depends on residues E140 and E149. The tract at residues 187-227 (ENKMEDLEIAMHDWNLFVEDTESYYGVNMNVLTKAYRAEHE) is dimerization arm.

It belongs to the class I-like SAM-binding methyltransferase superfamily. Protein arginine N-methyltransferase family. In terms of assembly, ring-like homodimer.

It carries out the reaction L-arginyl-[protein] + 2 S-adenosyl-L-methionine = N(omega),N(omega)-dimethyl-L-arginyl-[protein] + 2 S-adenosyl-L-homocysteine + 2 H(+). In terms of biological role, methylates (mono and asymmetric dimethylation) the guanidino nitrogens of arginyl residues in some proteins. The polypeptide is Protein arginine N-methyltransferase PRMT10 (PRMT10) (Oryza sativa subsp. japonica (Rice)).